Here is a 379-residue protein sequence, read N- to C-terminus: Dual-specificity RNA methyltransferase RlmN (379 aa).

Glu-95 functions as the Proton acceptor in the catalytic mechanism. The region spanning 101–345 (EETRGTLCVS…TTVRKTRGDD (245 aa)) is the Radical SAM core domain. Cysteines 108 and 350 form a disulfide. Cys-115, Cys-119, and Cys-122 together coordinate [4Fe-4S] cluster. S-adenosyl-L-methionine is bound by residues 176 to 177 (GE), Ser-208, 230 to 232 (SLH), and Asn-307. The active-site S-methylcysteine intermediate is the Cys-350.

It belongs to the radical SAM superfamily. RlmN family. The cofactor is [4Fe-4S] cluster.

The protein resides in the cytoplasm. The catalysed reaction is adenosine(2503) in 23S rRNA + 2 reduced [2Fe-2S]-[ferredoxin] + 2 S-adenosyl-L-methionine = 2-methyladenosine(2503) in 23S rRNA + 5'-deoxyadenosine + L-methionine + 2 oxidized [2Fe-2S]-[ferredoxin] + S-adenosyl-L-homocysteine. It catalyses the reaction adenosine(37) in tRNA + 2 reduced [2Fe-2S]-[ferredoxin] + 2 S-adenosyl-L-methionine = 2-methyladenosine(37) in tRNA + 5'-deoxyadenosine + L-methionine + 2 oxidized [2Fe-2S]-[ferredoxin] + S-adenosyl-L-homocysteine. Its function is as follows. Specifically methylates position 2 of adenine 2503 in 23S rRNA and position 2 of adenine 37 in tRNAs. m2A2503 modification seems to play a crucial role in the proofreading step occurring at the peptidyl transferase center and thus would serve to optimize ribosomal fidelity. This chain is Dual-specificity RNA methyltransferase RlmN, found in Burkholderia lata (strain ATCC 17760 / DSM 23089 / LMG 22485 / NCIMB 9086 / R18194 / 383).